The following is a 543-amino-acid chain: Probable protein kinase UbiB (543 aa).

One can recognise a Protein kinase domain in the interval 123–500 (DFDQQPLASA…HRRHAQARFL (378 aa)). ATP is bound by residues 129-137 (LASASVAQV) and Lys152. The active-site Proton acceptor is the Asp286. Helical transmembrane passes span 499–519 (FLLGAGATLLLGSILLLPTHE) and 521–541 (LASAGLTISIICWLNGWWKIS).

It belongs to the ABC1 family. UbiB subfamily.

The protein localises to the cell inner membrane. It participates in cofactor biosynthesis; ubiquinone biosynthesis [regulation]. In terms of biological role, is probably a protein kinase regulator of UbiI activity which is involved in aerobic coenzyme Q (ubiquinone) biosynthesis. This Tolumonas auensis (strain DSM 9187 / NBRC 110442 / TA 4) protein is Probable protein kinase UbiB.